Here is a 274-residue protein sequence, read N- to C-terminus: Protein FAM210A (274 aa).

A compositionally biased stretch (polar residues) spans 51 to 66 (KWLHSQPKQQDSSTKT). Residues 51–91 (KWLHSQPKQQDSSTKTPVHDLPSGSQHQSEESSPSAKSSIS) are disordered. Residues 81 to 91 (ESSPSAKSSIS) are compositionally biased toward low complexity. In terms of domain architecture, DUF1279 spans 105–217 (DQSIGLLKRF…GYLSTPPLVK (113 aa)). A helical transmembrane segment spans residues 124 to 144 (VLIPVHLVTSSFWFGSFYYAA). Residues 221-274 (QDRMEETKELFTEKMEETRDIISGKMEETKDRISEKLQETKDRVAFRKKKNEEM) are a coiled coil.

The protein belongs to the FAM210 family.

Its subcellular location is the membrane. It is found in the mitochondrion. It localises to the cytoplasm. May play a role in the structure and strength of both muscle and bone. In Xenopus tropicalis (Western clawed frog), this protein is Protein FAM210A (fam210a).